We begin with the raw amino-acid sequence, 113 residues long: Hydrogenase maturation factor HypA (113 aa).

Position 2 (His2) interacts with Ni(2+). Residues Cys73, Cys76, Cys89, and Cys92 each contribute to the Zn(2+) site.

Belongs to the HypA/HybF family.

Involved in the maturation of [NiFe] hydrogenases. Required for nickel insertion into the metal center of the hydrogenase. This is Hydrogenase maturation factor HypA from Chlorobium phaeobacteroides (strain BS1).